Reading from the N-terminus, the 597-residue chain is Aspartate--tRNA ligase (597 aa).

Residue E180 coordinates L-aspartate. An aspartate region spans residues 204-207 (QLFK). Position 226 (R226) interacts with L-aspartate. Residues 226–228 (RDE) and Q235 contribute to the ATP site. H454 provides a ligand contact to L-aspartate. E488 serves as a coordination point for ATP. R495 is an L-aspartate binding site. Residue 540 to 543 (GLDR) coordinates ATP.

This sequence belongs to the class-II aminoacyl-tRNA synthetase family. Type 1 subfamily. In terms of assembly, homodimer.

Its subcellular location is the cytoplasm. It carries out the reaction tRNA(Asp) + L-aspartate + ATP = L-aspartyl-tRNA(Asp) + AMP + diphosphate. Its function is as follows. Catalyzes the attachment of L-aspartate to tRNA(Asp) in a two-step reaction: L-aspartate is first activated by ATP to form Asp-AMP and then transferred to the acceptor end of tRNA(Asp). This chain is Aspartate--tRNA ligase, found in Clostridium perfringens (strain SM101 / Type A).